Here is a 105-residue protein sequence, read N- to C-terminus: 5-hydroxymethyl-dUMP N-hydrolase (105 aa).

Gly6, Ile8, Ser42, Gly44, Glu48, and Ser72 together coordinate 5-hydroxymethyl-dUMP.

The protein belongs to the 2'-deoxynucleoside 5'-phosphate N-hydrolase 1 family. Monomer and homodimer.

It localises to the cytoplasm. Its subcellular location is the nucleus. The catalysed reaction is 5-hydroxymethyl-dUMP + H2O = 5-hydroxymethyluracil + 2-deoxy-D-ribose 5-phosphate. Functionally, part of a nucleotide salvage pathway that eliminates epigenetically modified 5-hydroxymethyl-dCMP (hmdCMP) in a two-step process entailing deamination to cytotoxic 5-hydroxymethyl-dUMP (hmdUMP), followed by its hydrolysis into 5-hydroxymethyluracil (hmU) and 2-deoxy-D-ribose 5-phosphate (deoxyribosephosphate). Catalyzes the second step in that pathway, the hydrolysis of the N-glycosidic bond in hmdUMP, degrading this cytotoxic nucleotide to avoid its genomic integration. The protein is 5-hydroxymethyl-dUMP N-hydrolase of Branchiostoma floridae (Florida lancelet).